The sequence spans 209 residues: Glutathione S-transferase F7 (209 aa).

The GST N-terminal domain occupies 2-83 (AGIKVFGHPA…YIAHFYSDKG (82 aa)). Glutathione contacts are provided by residues 12–13 (ST), 41–42 (HK), 54–55 (KV), and 67–68 (ES). Residues 90 to 209 (GSKDIAGIAM…TSRPSAKKVL (120 aa)) form the GST C-terminal domain.

It belongs to the GST superfamily. Phi family.

Its subcellular location is the cytoplasm. It localises to the cytosol. It catalyses the reaction RX + glutathione = an S-substituted glutathione + a halide anion + H(+). In terms of biological role, may be involved in the conjugation of reduced glutathione to a wide number of exogenous and endogenous hydrophobic electrophiles and have a detoxification role against certain herbicides. In Arabidopsis thaliana (Mouse-ear cress), this protein is Glutathione S-transferase F7.